Here is a 256-residue protein sequence, read N- to C-terminus: Peroxisomal membrane protein PMP30B (256 aa).

The protein belongs to the peroxin-11 family.

It localises to the peroxisome membrane. In terms of biological role, involved in peroxisomal proliferation. Could participate in peroxisomal elongation or fission. May be involved in parceling of peroxisomes into regular quanta. The chain is Peroxisomal membrane protein PMP30B (PEX11B) from Candida boidinii (Yeast).